The chain runs to 294 residues: 4-hydroxy-tetrahydrodipicolinate synthase (294 aa).

Position 48 (threonine 48) interacts with pyruvate. Residue tyrosine 136 is the Proton donor/acceptor of the active site. Lysine 164 serves as the catalytic Schiff-base intermediate with substrate. Isoleucine 206 contacts pyruvate.

This sequence belongs to the DapA family. In terms of assembly, homotetramer; dimer of dimers.

It localises to the cytoplasm. The catalysed reaction is L-aspartate 4-semialdehyde + pyruvate = (2S,4S)-4-hydroxy-2,3,4,5-tetrahydrodipicolinate + H2O + H(+). The protein operates within amino-acid biosynthesis; L-lysine biosynthesis via DAP pathway; (S)-tetrahydrodipicolinate from L-aspartate: step 3/4. Functionally, catalyzes the condensation of (S)-aspartate-beta-semialdehyde [(S)-ASA] and pyruvate to 4-hydroxy-tetrahydrodipicolinate (HTPA). The sequence is that of 4-hydroxy-tetrahydrodipicolinate synthase from Phenylobacterium zucineum (strain HLK1).